The following is a 514-amino-acid chain: 2,3-bisphosphoglycerate-independent phosphoglycerate mutase (514 aa).

Positions 14 and 64 each coordinate Mn(2+). The Phosphoserine intermediate role is filled by Ser64. Substrate is bound by residues His125, 155–156 (RD), Arg187, Arg193, 263–266 (RADR), and Lys336. Mn(2+) is bound by residues Asp403, His407, Asp444, His445, and His463.

The protein belongs to the BPG-independent phosphoglycerate mutase family. In terms of assembly, monomer. It depends on Mn(2+) as a cofactor.

It carries out the reaction (2R)-2-phosphoglycerate = (2R)-3-phosphoglycerate. Its pathway is carbohydrate degradation; glycolysis; pyruvate from D-glyceraldehyde 3-phosphate: step 3/5. Its function is as follows. Catalyzes the interconversion of 2-phosphoglycerate and 3-phosphoglycerate. In Shewanella denitrificans (strain OS217 / ATCC BAA-1090 / DSM 15013), this protein is 2,3-bisphosphoglycerate-independent phosphoglycerate mutase.